A 274-amino-acid chain; its full sequence is Thiamine kinase (274 aa).

This sequence belongs to the thiamine kinase family.

The enzyme catalyses thiamine + ATP = thiamine phosphate + ADP + H(+). The protein operates within cofactor biosynthesis; thiamine diphosphate biosynthesis; thiamine phosphate from thiamine: step 1/1. In terms of biological role, catalyzes the ATP-dependent phosphorylation of thiamine to thiamine phosphate. Is involved in thiamine salvage. The protein is Thiamine kinase of Escherichia coli O157:H7.